We begin with the raw amino-acid sequence, 405 residues long: Probable tRNA sulfurtransferase (405 aa).

Residues Thr60–Leu165 enclose the THUMP domain. ATP contacts are provided by residues Met183–Leu184, His208–Phe209, Arg265, Gly287, and Gln296.

This sequence belongs to the ThiI family.

The protein localises to the cytoplasm. It catalyses the reaction [ThiI sulfur-carrier protein]-S-sulfanyl-L-cysteine + a uridine in tRNA + 2 reduced [2Fe-2S]-[ferredoxin] + ATP + H(+) = [ThiI sulfur-carrier protein]-L-cysteine + a 4-thiouridine in tRNA + 2 oxidized [2Fe-2S]-[ferredoxin] + AMP + diphosphate. It carries out the reaction [ThiS sulfur-carrier protein]-C-terminal Gly-Gly-AMP + S-sulfanyl-L-cysteinyl-[cysteine desulfurase] + AH2 = [ThiS sulfur-carrier protein]-C-terminal-Gly-aminoethanethioate + L-cysteinyl-[cysteine desulfurase] + A + AMP + 2 H(+). It participates in cofactor biosynthesis; thiamine diphosphate biosynthesis. Its function is as follows. Catalyzes the ATP-dependent transfer of a sulfur to tRNA to produce 4-thiouridine in position 8 of tRNAs, which functions as a near-UV photosensor. Also catalyzes the transfer of sulfur to the sulfur carrier protein ThiS, forming ThiS-thiocarboxylate. This is a step in the synthesis of thiazole, in the thiamine biosynthesis pathway. The sulfur is donated as persulfide by IscS. In Lactobacillus acidophilus (strain ATCC 700396 / NCK56 / N2 / NCFM), this protein is Probable tRNA sulfurtransferase.